Here is a 468-residue protein sequence, read N- to C-terminus: Secretogranin-3 (468 aa).

An N-terminal signal peptide occupies residues 1 to 19; that stretch reads MGFLGTGTWILVLVLPIQA. Residues 23–69 are disordered; the sequence is PGGSQDKSLHNRELSAERPLNEQIAEAEEDKIKKTYPPENKPGQSNY. Residues 29–42 show a composition bias toward basic and acidic residues; sequence KSLHNRELSAERPL. Ser37 carries the post-translational modification Phosphoserine. Residue Ser37 is glycosylated (O-linked (Xyl...) (chondroitin sulfate) serine). O-linked (GalNAc...) threonine glycosylation is found at Thr216 and Thr231. A disordered region spans residues 353 to 406; the sequence is KLFPAPSEKSHEETDSTKEEAAKMEKEYGSLKDSTKDDNSNPGGKTDEPKGKTE. O-linked (GalNAc...) serine glycosylation is present at Ser359. The segment covering 360 to 406 has biased composition (basic and acidic residues); sequence EKSHEETDSTKEEAAKMEKEYGSLKDSTKDDNSNPGGKTDEPKGKTE. Ser362 is subject to Phosphoserine.

In terms of assembly, interacts with CHGA. Interacts with secretogranin II/SCG2. Interacts (via C-terminus) with CPE. In terms of processing, O-glycosylated. Detected in urine (at protein level). Expressed in brain, heart, kidney, liver and skeletal muscle.

Its subcellular location is the cytoplasmic vesicle. It localises to the secretory vesicle. It is found in the secretory vesicle membrane. The protein resides in the secreted. Functionally, member of the granin protein family that regulates the biogenesis of secretory granules. Acts as a sorting receptor for intragranular proteins including chromogranin A/CHGA. May also play a role in angiogenesis. Promotes endothelial proliferation, migration and tube formation through MEK/ERK signaling pathway. The chain is Secretogranin-3 (SCG3) from Homo sapiens (Human).